A 444-amino-acid polypeptide reads, in one-letter code: NADH-quinone oxidoreductase subunit F (444 aa).

62–71 (GRGGAGFLTG) contributes to the NAD(+) binding site. Position 177-224 (177-224 (GAGRYICGEETALINSLEGRRANPRFKPPFPAYVGLWGKPTCVNNVET)) interacts with FMN. The [4Fe-4S] cluster site is built by Cys354, Cys357, Cys360, and Cys401.

Belongs to the complex I 51 kDa subunit family. As to quaternary structure, composed of 13 different subunits. Subunits NuoCD, E, F, and G constitute the peripheral sector of the complex. [4Fe-4S] cluster is required as a cofactor. Requires FMN as cofactor.

The enzyme catalyses a quinone + NADH + 5 H(+)(in) = a quinol + NAD(+) + 4 H(+)(out). Functionally, NDH-1 shuttles electrons from NADH, via FMN and iron-sulfur (Fe-S) centers, to quinones in the respiratory chain. Couples the redox reaction to proton translocation (for every two electrons transferred, four hydrogen ions are translocated across the cytoplasmic membrane), and thus conserves the redox energy in a proton gradient. In Buchnera aphidicola subsp. Baizongia pistaciae (strain Bp), this protein is NADH-quinone oxidoreductase subunit F (nuoF).